Consider the following 62-residue polypeptide: Metallothionein-4 (62 aa).

Residues C6, C8, C14, C16, C20, C22, C25, C27, C30, C34, C35, C37, C38, C42, C45, C49, C51, C58, C60, and C61 each contribute to the a divalent metal cation site.

This sequence belongs to the metallothionein superfamily. Type 1 family.

In terms of biological role, seems to bind zinc and copper. Could play a special role in regulating zinc metabolism during the differentiation of stratified epithelia. The chain is Metallothionein-4 (MT4) from Canis lupus familiaris (Dog).